A 67-amino-acid polypeptide reads, in one-letter code: Large ribosomal subunit protein bL31 (67 aa).

It belongs to the bacterial ribosomal protein bL31 family. Type A subfamily. As to quaternary structure, part of the 50S ribosomal subunit.

Functionally, binds the 23S rRNA. The protein is Large ribosomal subunit protein bL31 of Helicobacter acinonychis (strain Sheeba).